The primary structure comprises 2715 residues: Chromodomain-helicase-DNA-binding protein 6 (2715 aa).

A compositionally biased stretch (basic and acidic residues) spans 1-11; sequence MKMKIQKKEKQ. Disordered stretches follow at residues 1-30 and 66-244; these read MKMKIQKKEKQLSNLKVLNHSPMSDASVNF and EEAA…QVKR. Residues 1–747 form a required for DNA-dependent ATPase activity region; that stretch reads MKMKIQKKEK…MMELRKCCNH (747 aa). Over residues 12–27 the composition is skewed to polar residues; that stretch reads LSNLKVLNHSPMSDAS. Positions 123–172 are enriched in basic and acidic residues; that stretch reads EPKEPKEPRKAKEPKKAKEHKEPKQKDGAKKARKPREASGTKEAKEKRSC. 2 consecutive Chromo domains span residues 292-343 and 375-439; these read NIIE…KDPR and VEVD…KHVE. A Helicase ATP-binding domain is found at 473-647; the sequence is LFNWYNRKNC…FSLLNFLEPS (175 aa). Position 486–493 (486–493) interacts with ATP; that stretch reads DEMGLGKT. Residues 598 to 601 carry the DEAH box motif; it reads DEAH. Residues 787–956 form the Helicase C-terminal domain; the sequence is LIDKLLPKLI…LSKMEVEDLL (170 aa). A disordered region spans residues 1318 to 1390; it reads KSLSAEQGVT…SDPDKSPWPV (73 aa). The span at 1321–1330 shows a compositional bias: polar residues; it reads SAEQGVTDGT. Basic and acidic residues-rich tracts occupy residues 1333–1351 and 1367–1376; these read IPERGNTDKEDNAEDKVDG and FSEKKDDSRA. The Myb-like domain occupies 1449 to 1503; that stretch reads RWTRREQADFYRTVSSFGVVYDQEKKTFDWTQFRIISRLDKKSDESLEQYFYSFV. The segment covering 2027–2038 has biased composition (basic and acidic residues); the sequence is FENKDDYDRDGN. Disordered regions lie at residues 2027–2063, 2116–2148, 2321–2351, 2373–2422, 2547–2602, and 2648–2715; these read FENKDDYDRDGNCHSQDYPGKYSEEESKSSTSGITGD, SQQYEPSGTLPTPVLTSSAGSRTSLSEPEAAEH, QATLSTTHPEGPGPATSAPEPATAASSQAEK, PGFG…FLPE, TSTA…PAIT, and VGLE…NDTN. Polar residues predominate over residues 2116–2141; the sequence is SQQYEPSGTLPTPVLTSSAGSRTSLS. A compositionally biased stretch (low complexity) spans 2329 to 2346; the sequence is PEGPGPATSAPEPATAAS. Positions 2547-2560 are enriched in low complexity; sequence TSTAPASLSSTTKS. Composition is skewed to basic and acidic residues over residues 2567 to 2588 and 2706 to 2715; these read KTAEDKPSSHDVKTDTLAEDKP and ALKDSNNDTN.

Belongs to the SNF2/RAD54 helicase family. Interacts with NFE2L2; involved in activation of the transcription. In terms of assembly, (Microbial infection) Interacts with the influenza A polymerase complex composed fo PB1, PB2 and PA. As to quaternary structure, (Microbial infection) Interacts (via N-terminus) with human papillomavirus protein E8^E2C (via C-terminus); this interaction induces transcriptional repression of the viral genome. As to expression, widely expressed.

The protein resides in the nucleus. It localises to the nucleoplasm. It catalyses the reaction ATP + H2O = ADP + phosphate + H(+). Functionally, ATP-dependent chromatin-remodeling factor. Regulates transcription by disrupting nucleosomes in a largely non-sliding manner which strongly increases the accessibility of chromatin; nucleosome disruption requires ATP. Activates transcription of specific genes in response to oxidative stress through interaction with NFE2L2. Its function is as follows. (Microbial infection) Acts as a transcriptional repressor of different viruses including influenza virus or papillomavirus. During influenza virus infection, the viral polymerase complex localizes CHD6 to inactive chromatin where it gets degraded in a proteasome independent-manner. This chain is Chromodomain-helicase-DNA-binding protein 6 (CHD6), found in Homo sapiens (Human).